A 368-amino-acid polypeptide reads, in one-letter code: tRNA(Met) cytidine acetate ligase (368 aa).

Residues 7–20 (IAEF…HKYL), G96, N152, and R175 contribute to the ATP site.

The protein belongs to the TmcAL family.

The protein resides in the cytoplasm. The catalysed reaction is cytidine(34) in elongator tRNA(Met) + acetate + ATP = N(4)-acetylcytidine(34) in elongator tRNA(Met) + AMP + diphosphate. Catalyzes the formation of N(4)-acetylcytidine (ac(4)C) at the wobble position of elongator tRNA(Met), using acetate and ATP as substrates. First activates an acetate ion to form acetyladenylate (Ac-AMP) and then transfers the acetyl group to tRNA to form ac(4)C34. The chain is tRNA(Met) cytidine acetate ligase from Streptococcus pyogenes serotype M49 (strain NZ131).